Consider the following 671-residue polypeptide: Probable potassium transport system protein Kup 2 (671 aa).

The next 12 helical transmembrane spans lie at 12-32 (FAGL…SPLY), 56-76 (ISLI…MIAL), 99-119 (WLVI…TLTP), 139-159 (IPVP…VILF), 172-192 (AFGP…IANL), 218-238 (VGIL…ALYS), 251-271 (SWPY…AWIL), 296-316 (LFAI…LITG), 345-365 (IYIP…VFLF), 374-394 (AYGL…FEYL), 400-420 (PLYL…MFLI), and 429-449 (GGYV…VWFY).

The protein belongs to the HAK/KUP transporter (TC 2.A.72) family.

The protein resides in the cell membrane. The catalysed reaction is K(+)(in) + H(+)(in) = K(+)(out) + H(+)(out). Transport of potassium into the cell. Likely operates as a K(+):H(+) symporter. In Lactobacillus acidophilus (strain ATCC 700396 / NCK56 / N2 / NCFM), this protein is Probable potassium transport system protein Kup 2.